The chain runs to 945 residues: LPS-assembly protein LptD (945 aa).

Residues 1–33 (MALKSPAFRKKFPLLVTGSLLALQPLATSFVVA) form the signal peptide. The interval 56–98 (AQLPPRPVHDANSVSSSVATAADATGEEASGDKSKLVTEAKGR) is disordered. The span at 65 to 79 (DANSVSSSVATAADA) shows a compositional bias: low complexity. Basic and acidic residues predominate over residues 85–98 (SGDKSKLVTEAKGR).

The protein belongs to the LptD family. In terms of assembly, component of the lipopolysaccharide transport and assembly complex. Interacts with LptE and LptA.

It is found in the cell outer membrane. In terms of biological role, together with LptE, is involved in the assembly of lipopolysaccharide (LPS) at the surface of the outer membrane. In Pseudomonas fluorescens (strain ATCC BAA-477 / NRRL B-23932 / Pf-5), this protein is LPS-assembly protein LptD.